A 367-amino-acid polypeptide reads, in one-letter code: Alanine racemase (367 aa).

The active-site Proton acceptor; specific for D-alanine is Lys-40. Lys-40 carries the post-translational modification N6-(pyridoxal phosphate)lysine. Arg-136 contributes to the substrate binding site. Tyr-263 functions as the Proton acceptor; specific for L-alanine in the catalytic mechanism. Met-310 serves as a coordination point for substrate.

It belongs to the alanine racemase family. It depends on pyridoxal 5'-phosphate as a cofactor.

The enzyme catalyses L-alanine = D-alanine. The protein operates within amino-acid biosynthesis; D-alanine biosynthesis; D-alanine from L-alanine: step 1/1. Its function is as follows. Catalyzes the interconversion of L-alanine and D-alanine. May also act on other amino acids. This chain is Alanine racemase (alr), found in Streptococcus pneumoniae (strain Taiwan19F-14).